Consider the following 319-residue polypeptide: L-lactate dehydrogenase 2 (319 aa).

Residues Val16, Asp37, Lys42, Tyr68, and 82–83 contribute to the NAD(+) site; that span reads GA. Substrate is bound by residues Gln85 and Arg91. NAD(+) contacts are provided by residues Ser104, 121 to 123, and Ser146; that span reads AAN. 123 to 126 lines the substrate pocket; the sequence is NPVD. Residue 151–154 coordinates substrate; sequence DSAR. His178 acts as the Proton acceptor in catalysis. Tyr222 carries the phosphotyrosine modification. Thr231 contacts substrate.

Belongs to the LDH/MDH superfamily. LDH family. Homotetramer.

The protein localises to the cytoplasm. It carries out the reaction (S)-lactate + NAD(+) = pyruvate + NADH + H(+). It functions in the pathway fermentation; pyruvate fermentation to lactate; (S)-lactate from pyruvate: step 1/1. Its function is as follows. Catalyzes the conversion of lactate to pyruvate (Potential). Contributes to S.aureus growth during nitrosative stress in both aerobically and anaerobically cultured cells, despite playing a secondary role in this resistance mechanism. This Staphylococcus aureus (strain Mu3 / ATCC 700698) protein is L-lactate dehydrogenase 2.